Reading from the N-terminus, the 93-residue chain is Protein NONRESPONDING TO OXYLIPINS 2, mitochondrial (93 aa).

A mitochondrion-targeting transit peptide spans 1-27 (MASRCRSLSKPAFSAFRSAMNKPSIRP).

Expressed in cotyledons, roots and flowers.

It is found in the mitochondrion. Essential for mitochondrial morphology, functionality and distribution. Contributes to 9-lipoxygenase (9-LOX)-derived oxylipin synthesis, but not to brassinosteroids (BRs) signaling. Required for waving-inducing oxylipin 9-hydroxyoctadecatrienoic acid and derivatives (e.g. 9-HOT, 2-HOE, 13-HOT, 13-HOD, 13-KOD, 12,13-KHOD, 9-HOT, 9-HOD, 9-KOT, 9-KOD and 9,10-KHOE)-mediated root development regulation, including callose deposition, root waving and lateral roots formation. Involved in basal plant defense toward pathogenic bacteria (e.g. Pseudomonas syringae pv tomato), both in compatible (e.g. Pst DC3000) and incompatible (e.g. Pst DC3000 avrRPM1) interactions, as well as against obligate biotrophic pathogenic fungi (e.g. Golovinomyces cichoracearum), probably via the promotion of callose deposition in the cell wall. Confers sensitivity to the herbicide isoxaben, a herbicide inhibiting cellulose synthesis and altering the cell wall. This Arabidopsis thaliana (Mouse-ear cress) protein is Protein NONRESPONDING TO OXYLIPINS 2, mitochondrial.